Reading from the N-terminus, the 85-residue chain is High-potential iron-sulfur protein (85 aa).

Residues cysteine 43, cysteine 46, cysteine 63, and cysteine 77 each coordinate [4Fe-4S] cluster.

The protein belongs to the high-potential iron-sulfur protein (HiPIP) family. As to quaternary structure, homodimer.

Its subcellular location is the periplasm. Its function is as follows. Specific class of high-redox-potential 4Fe-4S ferredoxins. Functions in anaerobic electron transport in most purple and in some other photosynthetic bacteria and in at least one genus (Paracoccus) of halophilic, denitrifying bacteria. This Allochromatium warmingii (Chromatium warmingii) protein is High-potential iron-sulfur protein.